Reading from the N-terminus, the 374-residue chain is uncharacterized protein (374 aa).

The tract at residues 182-201 is disordered; it reads PALGESPQGQKSSASSDKAV. Polar residues predominate over residues 188-197; that stretch reads PQGQKSSASS.

This is an uncharacterized protein from Rattus norvegicus (Rat).